A 254-amino-acid chain; its full sequence is Imidazole glycerol phosphate synthase subunit HisF (254 aa).

Residues D12 and D131 contribute to the active site.

Belongs to the HisA/HisF family. Heterodimer of HisH and HisF.

It is found in the cytoplasm. The catalysed reaction is 5-[(5-phospho-1-deoxy-D-ribulos-1-ylimino)methylamino]-1-(5-phospho-beta-D-ribosyl)imidazole-4-carboxamide + L-glutamine = D-erythro-1-(imidazol-4-yl)glycerol 3-phosphate + 5-amino-1-(5-phospho-beta-D-ribosyl)imidazole-4-carboxamide + L-glutamate + H(+). It functions in the pathway amino-acid biosynthesis; L-histidine biosynthesis; L-histidine from 5-phospho-alpha-D-ribose 1-diphosphate: step 5/9. Functionally, IGPS catalyzes the conversion of PRFAR and glutamine to IGP, AICAR and glutamate. The HisF subunit catalyzes the cyclization activity that produces IGP and AICAR from PRFAR using the ammonia provided by the HisH subunit. In Frankia casuarinae (strain DSM 45818 / CECT 9043 / HFP020203 / CcI3), this protein is Imidazole glycerol phosphate synthase subunit HisF.